The following is a 735-amino-acid chain: Urea active transporter (735 aa).

Topologically, residues 1–14 (MGEFKPPLPQGAGY) are cytoplasmic. The helical transmembrane segment at 15–35 (AIVLGLGAVFAGMMVLTTYLL) threads the bilayer. Over 36-85 (KRYQKEIITAEEFTTAGRSVKTGLVAAAVVSSWIWCSTLLTSSTKEYADG) the chain is Extracellular. The helical transmembrane segment at 86–106 (IFGGYAYAAGACFQIIAFAIL) threads the bilayer. The Cytoplasmic portion of the chain corresponds to 107–130 (AIKTKQMAPNAHTYLELVRTRYGK). The chain crosses the membrane as a helical span at residues 131–151 (IGHGCYLFYAIATNILVTSML). The Extracellular portion of the chain corresponds to 152-166 (LTSGSAVFSDLTGMN). The helical transmembrane segment at 167–187 (TIASCFLLPVGVVVYTLFGGI) threads the bilayer. At 188–189 (KA) the chain is on the cytoplasmic side. A helical transmembrane segment spans residues 190 to 210 (TFLTDYMHTCVIIIIVLVFAF). The Extracellular segment spans residues 211-253 (KVYATSDVLGSPGKVYDLVREAAKRHPVDGNYQGEYMTMTSKS). A helical transmembrane segment spans residues 254–274 (AGILLIINLIGNFGTVFLDNG). The Cytoplasmic segment spans residues 275 to 295 (YWNKAISASPAASLKAYAIGG). The helical transmembrane segment at 296–316 (LAWFAVPSLISLTMGLACLAV) threads the bilayer. Topologically, residues 317–343 (ETSPNFPTYPDPLTSFQANSGLVLPAA) are extracellular. A helical membrane pass occupies residues 344–364 (AIAIMGKGGAVASLLMIFMAV). Over 365–403 (TSAMSAELIAVSSVFTYDIYREYIDPRASGKKLIYTSHV) the chain is Cytoplasmic. Residues 404–424 (ACIFFGLAMSGFSVGLYYGGI) form a helical membrane-spanning segment. Ser-425 is a topological domain (extracellular). The chain crosses the membrane as a helical span at residues 426–446 (MGYIYEMMGIIISSAVLPVVL). Topologically, residues 447-454 (TLCSKDMN) are cytoplasmic. The helical transmembrane segment at 455–475 (LVAAVVSPILGTGLAIMSWLV) threads the bilayer. Residues 476–496 (CTKSLYKELTVDTTFMDYPML) are Extracellular-facing. A helical membrane pass occupies residues 497-517 (TGNLVALLSPAIFIPILTYVF). Over 518 to 618 (KPQNFDWEKM…EQRELARGLK (101 aa)) the chain is Cytoplasmic. Positions 553-572 (ANDKEQEEETNSLVSDSEKN) are disordered. The helical transmembrane segment at 619–639 (IAYFLCVFFALAFLVVWPMPM) threads the bilayer. At 640 to 650 (YGSKYIFSKKF) the chain is on the extracellular side. A helical membrane pass occupies residues 651 to 671 (FTGWVVVMIIWLFFSAFAVCI). Over 672–735 (YPLWEGRHGI…SHFGQVDEII (64 aa)) the chain is Cytoplasmic.

The protein belongs to the sodium:solute symporter (SSF) (TC 2.A.21) family. In terms of assembly, may polymerize.

It is found in the membrane. Functionally, required for active transport of urea. This is Urea active transporter (DUR3) from Saccharomyces cerevisiae (strain ATCC 204508 / S288c) (Baker's yeast).